A 343-amino-acid polypeptide reads, in one-letter code: Fructose-1,6-bisphosphatase class 1 (343 aa).

Mg(2+)-binding residues include glutamate 90, aspartate 109, leucine 111, and aspartate 112. Substrate is bound by residues 112 to 115 (DGSS) and asparagine 199. Glutamate 271 lines the Mg(2+) pocket.

This sequence belongs to the FBPase class 1 family. In terms of assembly, homotetramer. It depends on Mg(2+) as a cofactor.

The protein localises to the cytoplasm. It carries out the reaction beta-D-fructose 1,6-bisphosphate + H2O = beta-D-fructose 6-phosphate + phosphate. It participates in carbohydrate biosynthesis; Calvin cycle. The protein is Fructose-1,6-bisphosphatase class 1 of Rhodopseudomonas palustris (strain ATCC BAA-98 / CGA009).